The chain runs to 93 residues: UPF0390 protein C24B10.18 (93 aa).

The segment at 1 to 32 (MAQGEFKKKKNSSANKGGRVTKHSKNPKKGAR) is disordered. Residues 19 to 31 (RVTKHSKNPKKGA) show a composition bias toward basic residues.

Belongs to the UPF0390 family.

The polypeptide is UPF0390 protein C24B10.18 (Schizosaccharomyces pombe (strain 972 / ATCC 24843) (Fission yeast)).